Reading from the N-terminus, the 208-residue chain is MAIHVKGQLPNAHFHKDWQRYVKTWFNQPGRKLRRRQARQTKAAKIAPRPVEAIRPAVKPPTIRYNMKVRAGRGFTLEELKAAGVSRRVASTIGIPVDHRRRNRSEESLQRNVERIKVYLAHLIVFPRKAGQPKKGDATDVSGAEQTDVAAVLPITQEAVEEAKPITEEAKNFNAFSTLSNERAYARYAGARAAFQKKRAEEAEAKKK.

2 positions are modified to phosphoserine: S177 and S180.

The protein belongs to the eukaryotic ribosomal protein eL13 family. In terms of assembly, component of the large ribosomal subunit (LSU). Mature yeast ribosomes consist of a small (40S) and a large (60S) subunit. The 40S small subunit contains 1 molecule of ribosomal RNA (18S rRNA) and at least 33 different proteins. The large 60S subunit contains 3 rRNA molecules (25S, 5.8S and 5S rRNA) and at least 46 different proteins.

It localises to the cytoplasm. Functionally, component of the ribosome, a large ribonucleoprotein complex responsible for the synthesis of proteins in the cell. The small ribosomal subunit (SSU) binds messenger RNAs (mRNAs) and translates the encoded message by selecting cognate aminoacyl-transfer RNA (tRNA) molecules. The large subunit (LSU) contains the ribosomal catalytic site termed the peptidyl transferase center (PTC), which catalyzes the formation of peptide bonds, thereby polymerizing the amino acids delivered by tRNAs into a polypeptide chain. The nascent polypeptides leave the ribosome through a tunnel in the LSU and interact with protein factors that function in enzymatic processing, targeting, and the membrane insertion of nascent chains at the exit of the ribosomal tunnel. The chain is Large ribosomal subunit protein eL13 (rpl13) from Schizosaccharomyces pombe (strain 972 / ATCC 24843) (Fission yeast).